Here is a 378-residue protein sequence, read N- to C-terminus: MAANRDYYDVLGVSRDASDAEISKAYRKLAKKYHPDLNHEAGAEEKYKEVNEAYEVLHDPQKRQQYDQFGQAGMNGQGGFGGQYGGQGFGGADFGDFGDIFSSFFGGARQQVDPTAPQRGADLDYTMTIDFMDAIKGKTSEISYSRSTTCEVCKGSGAEKGTHPITCDKCGGSGMMTITQRSVLGMIQRQTTCDKCAGSGVIIQHPCHNCHGKGVKTQKQTLQVKVPAGIDNGQQIRLAGQGEAGKNGGPYGDLYIVFRVRPSKDFTRRGQTIYTTVPISFAQATLGDEINVKTVYGDTKLKIPAGTQPNQKFTLKEKGVPSLRGGSTGDQVTTVEIVIPKSINEAQRKALLEFVKASGGSIAPQEKGFFERLKEKLS.

A J domain is found at aspartate 6–glycine 70. Residues glycine 137–lysine 219 form a CR-type zinc finger. Positions 150, 153, 167, 170, 193, 196, 207, and 210 each coordinate Zn(2+). CXXCXGXG motif repeat units lie at residues cysteine 150–glycine 157, cysteine 167–glycine 174, cysteine 193–glycine 200, and cysteine 207–glycine 214.

The protein belongs to the DnaJ family. As to quaternary structure, homodimer. It depends on Zn(2+) as a cofactor.

It is found in the cytoplasm. Functionally, participates actively in the response to hyperosmotic and heat shock by preventing the aggregation of stress-denatured proteins and by disaggregating proteins, also in an autonomous, DnaK-independent fashion. Unfolded proteins bind initially to DnaJ; upon interaction with the DnaJ-bound protein, DnaK hydrolyzes its bound ATP, resulting in the formation of a stable complex. GrpE releases ADP from DnaK; ATP binding to DnaK triggers the release of the substrate protein, thus completing the reaction cycle. Several rounds of ATP-dependent interactions between DnaJ, DnaK and GrpE are required for fully efficient folding. Also involved, together with DnaK and GrpE, in the DNA replication of plasmids through activation of initiation proteins. In Lactobacillus delbrueckii subsp. bulgaricus (strain ATCC BAA-365 / Lb-18), this protein is Chaperone protein DnaJ.